Here is a 421-residue protein sequence, read N- to C-terminus: C2H2 type master regulator of conidiophore development brlA (421 aa).

Positions 228–242 (THSPTTPLRSCSIGT) are enriched in polar residues. Residues 228–247 (THSPTTPLRSCSIGTASGPD) are disordered. C2H2-type zinc fingers lie at residues 309–333 (FKCK…MKSH) and 339–364 (HVCW…TKTH). A compositionally biased stretch (basic residues) spans 361 to 370 (TKTHSKRGGR). Residues 361 to 421 (TKTHSKRGGR…REYSVDGLDD (61 aa)) are disordered.

The protein localises to the nucleus. Its function is as follows. BrlA, abaA and wetA are pivotal regulators of conidiophore development and conidium maturation. They act individually and together to regulate their own expression and that of numerous other sporulation-specific genes. Binds promoters of target genes at brlA response elements (BREs) containing the conserved sequence 5'-(C/A)(A/G)AGGG(G/A)-3'. The protein is C2H2 type master regulator of conidiophore development brlA of Aspergillus parasiticus (strain ATCC 56775 / NRRL 5862 / SRRC 143 / SU-1).